We begin with the raw amino-acid sequence, 429 residues long: Adenylosuccinate synthetase (429 aa).

GTP-binding positions include 12-18 (GDEGKGK) and 40-42 (GHT). Aspartate 13 functions as the Proton acceptor in the catalytic mechanism. Mg(2+) is bound by residues aspartate 13 and glycine 40. Residues 13–16 (DEGK), 38–41 (NAGH), threonine 128, arginine 142, glutamine 223, threonine 238, and arginine 302 each bind IMP. Histidine 41 (proton donor) is an active-site residue. Residue 298–304 (TTTGRPR) coordinates substrate. GTP contacts are provided by residues arginine 304, 330 to 332 (SID), and 412 to 414 (SVG).

Belongs to the adenylosuccinate synthetase family. As to quaternary structure, homodimer. Requires Mg(2+) as cofactor.

Its subcellular location is the cytoplasm. It carries out the reaction IMP + L-aspartate + GTP = N(6)-(1,2-dicarboxyethyl)-AMP + GDP + phosphate + 2 H(+). It participates in purine metabolism; AMP biosynthesis via de novo pathway; AMP from IMP: step 1/2. In terms of biological role, plays an important role in the de novo pathway of purine nucleotide biosynthesis. Catalyzes the first committed step in the biosynthesis of AMP from IMP. The polypeptide is Adenylosuccinate synthetase (Exiguobacterium sp. (strain ATCC BAA-1283 / AT1b)).